The primary structure comprises 891 residues: Receptor-like protein 50 (891 aa).

The first 22 residues, 1-22 (MITIIWSLCLIFCLSNSILVIA), serve as a signal peptide directing secretion. Residues 23-849 (KDLCLPDQRD…KEEKDKGLSW (827 aa)) lie on the Extracellular side of the membrane. N-linked (GlcNAc...) asparagine glycans are attached at residues N62 and N98. LRR repeat units lie at residues 105–130 (QHLQ…NFKY), 132–152 (RVLN…LRSL), 153–176 (SYLT…SMGN), 177–201 (LKHL…LGNL), 203–225 (YLTD…MGNL), 226–249 (KSLR…LGSL), and 250–272 (SNLT…SMSS). N200 is a glycosylation site (N-linked (GlcNAc...) asparagine). N-linked (GlcNAc...) asparagine glycans are attached at residues N251, N285, and N306. LRR repeat units lie at residues 286-309 (LSSL…NMSS), 310-334 (LSKL…LFML), 336-358 (SLIK…NISS), and 359-383 (PSNL…ILKL). Residue N355 is glycosylated (N-linked (GlcNAc...) asparagine). The stretch at 384–407 (VGLSALSLSFWDTGGIVDFSIFLQ) is one LRR 12; degenerate repeat. LRR repeat units follow at residues 408-436 (LKSL…MMHL), 438-453 (LSSC…LENQ), 454-477 (TSLY…LWRL), 478-504 (PTLR…IYSF), 506-519 (ASDN…PRAV), 520-544 (CEIG…EISN), 545-568 (KTLS…SLHG), 570-591 (LRSL…LINC), 593-614 (YLQF…WLKS), 615-641 (LPNL…SLSF), 642-665 (SKLR…YFVG), 712-736 (FEIY…IGIL), 737-760 (KELI…LSNL), 761-784 (SNLQ…LGEL), and 786-809 (FLAR…QIQS). N-linked (GlcNAc...) asparagine glycans are attached at residues N422, N442, and N452. N-linked (GlcNAc...) asparagine glycosylation is found at N531, N544, N554, N590, and N605. Residues N743 and N759 are each glycosylated (N-linked (GlcNAc...) asparagine). N-linked (GlcNAc...) asparagine glycosylation is found at N791 and N811. The chain crosses the membrane as a helical span at residues 850–870 (VAAAIGYVPGLFCGLAIGHIL). Topologically, residues 871–891 (TSYKRDWFMRIFSCFSSPLKK) are cytoplasmic.

Belongs to the RLP family.

The protein resides in the cell membrane. The polypeptide is Receptor-like protein 50 (Arabidopsis thaliana (Mouse-ear cress)).